The sequence spans 3655 residues: NuA4 acetyltransferase complex subunit Tra2 (3655 aa).

Residues 8–2459 (SLSSSIELLK…REYHIRLLGK (2452 aa)) form an HEAT region. HEAT repeat units follow at residues 46–89 (QLYA…CAHR), 94–131 (QYAQSCVLSFISLIKADNEEVAVFCLKVIMDIFKTFKF), 149–188 (TNLPYLIPSIFVENPKSNEEENTTLAFGSYLSTETSIIQQ), 230–268 (PGVQAIIPCFLKMVQIDVPIDIASYAMIEKDSSIDFIEF), 300–338 (LSEKDIIPDIVIKLLRRCPFDMCFARKELLVATRHILST), 374–412 (STLADLLHHVRDELNETQIRKSIMIYSTNMHDLTLSIGL), 438–475 (FLLLSIFDSFVNKFSELNDSLDQFFKKKYEEEIKETKS), 606–643 (IFLKVFETNLPTFFDQLKKNLTLFHIPQFLLSNESTSS), 644–683 (KFLNILLRFLLSRIEELGSSDIRHGSVLLRLFRLSFVTVS), 735–772 (SLYKEVMPLLHALLEAFNSLLISARTPKEKDLFTELCL), 783–820 (PYMSYLMRPLVMSLKSSQELVSQGLRTFELCLDNLTPD), 828–867 (PYIEDLMNALWSHLQPLPYNYNHSHTALKILGKLGGRNRK), 1100–1141 (AFIL…QDHS), 1147–1184 (DRQVDILTALFFTLKDTTSEVPTVCKDHVMDVLKQLFR), 1193–1230 (EIAPGILGHLVLELSNHNSVVRSSTQKLLSLLSELSNT), 1429–1470 (RKLL…LFHL), 1665–1704 (NLVSDLTAHLVKKIEEPDLENNVKLILNLILSKDYGFLLK), 1709–1746 (GILLTYLNQNVSSLEKCNQIFSIFYEVFFQHPSTNVYA), 1753–1790 (IGALQIISFFLKNVPEITVQHQTEMLKMCSLFGNSEDV), 1808–1846 (QFPYELVNVVYMALLKSSPIEVRHLVKSSFDNIFSYIFS), 1891–1934 (EHRG…WNDL), 1973–2011 (SEAISLLERLLSSGTWASLGMKLSFFTKSITHFDATDAN), 2036–2073 (ENLSDLKFLLEKSLENESVGVQSAIGNFVSTILTLSNT), 2120–2157 (DALHTLLPGFMRCFHKVAKEFLSLGSQPSGNSLNLQIV), 2183–2221 (DQRRWFLSALVQIIEKSSSYEICNYLLEIVRGWIMNSPV), and 2401–2438 (DFVLPVLSLQFSNSKIAEYLWRDFFNASVCSFTKDEIP). A head region spans residues 2460–3655 (TPNVLETILT…QMDQLWQAWL (1196 aa)). In terms of domain architecture, FAT spans 2484-3045 (LLVYLSKTYG…HFQLRTAYED (562 aa)). Positions 3059–3105 (RGNSRLRENDSSSDNKSKDLSPSGSFSSVSQFNSKNGSPSSIDSSEK) are disordered. A compositionally biased stretch (basic and acidic residues) spans 3063–3077 (RLRENDSSSDNKSKD). A compositionally biased stretch (low complexity) spans 3078–3092 (LSPSGSFSSVSQFNS). Residues 3285 to 3625 (VPNVDLVRGH…VISHNVPEDL (341 aa)) enclose the PI3K/PI4K catalytic domain. The interval 3291 to 3297 (VRGHTMC) is G-loop. Positions 3491–3499 (NIGGRSPQK) are catalytic loop. The interval 3511-3536 (SQDLLPSMTSNQPVFHNTEAVPFRLT) is activation loop. Positions 3623–3655 (EDLPLNQTLVDLVSQATNPQQLAQMDQLWQAWL) constitute an FATC domain.

It belongs to the PI3/PI4-kinase family. TRA1 subfamily. As to quaternary structure, component of the NuA4 acetyltransferase complex. Tra1 is the scaffold subunit for binding to a variety of transcription activators or transcription factors to recruit NuA4 for targeted gene activation. Requires Hsp90 and its co-chaperone, the Triple-T complex (TTT), for its incorporation into NuA4. Interacts with tel2.

Its function is as follows. Component of the NuA4 histone H4/H2A acetyltransferase involved in transcription and DNA repair. The protein is NuA4 acetyltransferase complex subunit Tra2 of Schizosaccharomyces pombe (strain 972 / ATCC 24843) (Fission yeast).